A 1122-amino-acid polypeptide reads, in one-letter code: MSSTSNENISSYVIFKSKGQHINTSYNPIDIHPIHPWIVYADSDSNIVIQNYQNNEKILNFSISQHDEEKKEQILLLQKKVPTLSALSSSASGINGTNNNNSGSNSSNNNNNNNGSLSNSPNNNNNVAFIGSTGGVDSRSASVTSIGSGGGVVTPINVNSNSNSNSPSVPTLHVIGNQTLHNRSPNNTIKLSPNSSNNDSLNNNNNNINNNSTNSNNYLNENLDKMKLGQIKFIYFYDKHTRSCKDKKPKISQNKLQNISKAQPSVGIEDYIVVVAENRIVFINYHSQRLREVKIPAFENKSPNSVEFFSNSPFVAFGGPDSMIRLWNTEKWEIEKQLAGHPKGTIVKLKAIEIEGEFLVSGGTDGFVCVWNVKTGSLATQFSKVHEIVDLSYDYVTGQVMALTQDRHIMIYDLNTLKEVSKVSCGKKEFFSIEAYYHSRFNQDLLLGMKQPAQVSFFSRSGSTKEYSIDLDALLNPSKKEKSKLYKVVQHPLQPHLLLCWLNKSVYIVSTLATSIPMQVTTFNSLSNDHTVYYPFAGYLYSSSLTNVLTCEKVQTPIQLSLNENYKLDISPSGKYLSIHAISSGNYQILEISTWKILEKGQALDVAWSGKGKDSTVDEKFGKLEKILESVDSVKKKKTLGILPSIVKSTKKEETVISKILLKTKEFNNNNVVQELLLHANEDRISGGLMLGVYHKESTNSNGTLNYGSGGSIGSGSGSGTISSGSSNLINGSVGGSSSNNSANSNNSNNNNNNNNNNSNNSNNNNNSSQPILEPPIITTGEETESKSFQLLDWWTLQPVGESLPPPLKIYWDQNQTHCAIAFTHYFFVFKLRPTFHMLCRWSLGITSAVWHNNTLFFSTHNDIQCIFPHKHESSPIILASSTGNVFPEDLYDLSSGSLSTSKPNQSFSTLPNIKPTGPISLIEVNNEGLVLLDSNYKFYCIPLTHYLLKFFILAQMEAIDLAMKCSTMVDPKYHYLMAKFLTVRGHPKECLQMNGISNFLKLQICLNNEAFETSLDIVPLITEAIKSGQSITNENNNDEEVTLSSMGKMCIEIGQRAQNKNEYPTAEKAFKLATSLEPNSAYQELALHYVFLKKMNELKELQQSISTTYPLESNLISLFLD.

Residues 88-126 (SSSASGINGTNNNNSGSNSSNNNNNNNGSLSNSPNNNNN) are compositionally biased toward low complexity. 2 disordered regions span residues 88-131 (SSSA…AFIG) and 178-215 (QTLHNRSPNNTIKLSPNSSNNDSLNNNNNNINNNSTNS). Positions 178-190 (QTLHNRSPNNTIK) are enriched in polar residues. Low complexity predominate over residues 191–215 (LSPNSSNNDSLNNNNNNINNNSTNS). WD repeat units follow at residues 298–337 (FENKSPNSVEFFSNSPFVAFGGPDSMIRLWNTEKWEIEKQ), 342–381 (PKGTIVKLKAIEIEGEFLVSGGTDGFVCVWNVKTGSLATQ), and 383–422 (SKVHEIVDLSYDYVTGQVMALTQDRHIMIYDLNTLKEVSK). Residues 731-775 (NGSVGGSSSNNSANSNNSNNNNNNNNNNSNNSNNNNNSSQPILEP) are disordered.

As to quaternary structure, component of the TSET complex, a heterohexamer composed of tstA, tstB, tstC, tstD, tstE and tstF, which may act in plasma membrane turnover. tstA, tstB, tstC and tstD are likely to be the core complex members with tstE and tstF acting as associated scaffold proteins.

In Dictyostelium discoideum (Social amoeba), this protein is TSET complex member tstF.